A 234-amino-acid polypeptide reads, in one-letter code: Cytidylate kinase (234 aa).

Position 10 to 18 (10 to 18 (GYSACGKST)) interacts with ATP.

It belongs to the cytidylate kinase family. Type 1 subfamily.

The protein resides in the cytoplasm. The enzyme catalyses CMP + ATP = CDP + ADP. It catalyses the reaction dCMP + ATP = dCDP + ADP. This is Cytidylate kinase from Cytophaga hutchinsonii (strain ATCC 33406 / DSM 1761 / CIP 103989 / NBRC 15051 / NCIMB 9469 / D465).